We begin with the raw amino-acid sequence, 215 residues long: Flagellin B1 (215 aa).

Residues 1-12 (MSVKNFMNNKKG) constitute a propeptide that is removed on maturation.

It belongs to the archaeal flagellin family.

The protein localises to the archaeal flagellum. Flagellin is the subunit protein which polymerizes to form the filaments of archaeal flagella. The sequence is that of Flagellin B1 (flaB1) from Methanococcus vannielii (strain ATCC 35089 / DSM 1224 / JCM 13029 / OCM 148 / SB).